Consider the following 193-residue polypeptide: Interleukin-18 (193 aa).

The propeptide occupies 1–36 (MAAEQVEDNCISFVEMKFINNTLYFVAENDEDLESD).

Belongs to the IL-1 family. As to quaternary structure, forms a ternary complex with ligand-binding receptor subunit IL18R1 and signaling receptor subunit IL18RAP at the plasma membrane. Mature IL18 first binds to IL18R1 forming a low affinity binary complex, which then interacts with IL18RAP to form a high affinity ternary complex that signals inside the cell. Interacts with cargo receptor TMED10; the interaction mediates the translocation from the cytoplasm into the ERGIC (endoplasmic reticulum-Golgi intermediate compartment) and thereby secretion. In terms of processing, the pro-IL-18 precursor is processed by CASP1, CASP4 or CASP5 to yield its mature, active form. The pro-IL-18 precursor features autoinhibitory interactions between the propeptide and the post-cleavage-site region, preventing recognition by the IL18R1 receptor. Processing by CASP1, CASP4 or CASP5 induces conformational changes to generate critical receptor-binding sites. The mature form is then secreted and released in the extracellular milieu by passing through the gasdermin-D (GSDMD) pore. In contrast, cleavage by CASP3 inactivates IL18.

It is found in the cytoplasm. The protein resides in the cytosol. Its subcellular location is the secreted. Pro-inflammatory cytokine primarily involved in epithelial barrier repair, polarized T-helper 1 (Th1) cell and natural killer (NK) cell immune responses. Upon binding to IL18R1 and IL18RAP, forms a signaling ternary complex which activates NF-kappa-B, triggering synthesis of inflammatory mediators. Synergizes with IL12/interleukin-12 to induce IFNG synthesis from T-helper 1 (Th1) cells and natural killer (NK) cells. Involved in transduction of inflammation downstream of pyroptosis: its mature form is specifically released in the extracellular milieu by passing through the gasdermin-D (GSDMD) pore. The sequence is that of Interleukin-18 (IL18) from Boselaphus tragocamelus (Nilgai).